The chain runs to 106 residues: Putative membrane protein insertion efficiency factor (106 aa).

It belongs to the UPF0161 family.

It is found in the cell inner membrane. Functionally, could be involved in insertion of integral membrane proteins into the membrane. This Acinetobacter baumannii (strain AB307-0294) protein is Putative membrane protein insertion efficiency factor.